A 265-amino-acid polypeptide reads, in one-letter code: Asparagine-rich protein (265 aa).

The first 21 residues, 1–21, serve as a signal peptide directing secretion; it reads MSRLTLLVLLVIAAVIQKVHG. Disordered stretches follow at residues 20 to 71 and 88 to 183; these read HGQG…NRNI and SNQN…NQQY. 2 stretches are compositionally biased toward basic and acidic residues: residues 22–35 and 44–55; these read QGRE…HEPG and EKTERNLREPNR. Low complexity predominate over residues 88–98; that stretch reads SNQNNFGNNRS. Residues 115–124 show a composition bias toward basic and acidic residues; the sequence is NKSEVEKENG. Over residues 152-166 the composition is skewed to basic residues; the sequence is KVQHRIAKRFQKRHP.

As to expression, nacreous layer of shell (at protein level). Expressed primarily in the mantle with highest level in the mantle pallium and lower level in the mantle edge.

It is found in the secreted. The protein is Asparagine-rich protein of Pinctada maxima (Silver-lipped pearl oyster).